Here is a 234-residue protein sequence, read N- to C-terminus: Opacity protein opA51 (234 aa).

Ala-1 is a signal peptide.

It belongs to the opacity porin family.

The protein resides in the cell outer membrane. Implicated in a number of adherence functions. OPA proteins are implicated in pathogenesis and are subject to phase variation. This Neisseria gonorrhoeae protein is Opacity protein opA51 (opaB).